We begin with the raw amino-acid sequence, 168 residues long: Ecotin (168 aa).

Residues 1 to 21 form the signal peptide; it reads MKRLSIAITSLLMAASASTIA. A disulfide bridge connects residues cysteine 76 and cysteine 113.

It belongs to the protease inhibitor I11 (ecotin) family. As to quaternary structure, homodimer.

It localises to the periplasm. In terms of biological role, general inhibitor of pancreatic serine proteases: inhibits chymotrypsin, trypsin, elastases, factor X, kallikrein as well as a variety of other proteases. In Yersinia enterocolitica serotype O:8 / biotype 1B (strain NCTC 13174 / 8081), this protein is Ecotin.